The following is a 155-amino-acid chain: MKIQLIAVGTKMPNWVTMGFEEYQRRFPKEMPFELIEIPAGKRGKNADIKRILEQEGKAMLAACGKSRIVTLDIPGKPWTTEQLATQLEVWKNDGRDLSLLIGGPEGLSAECKAAAEQSWSLSPLTLPHPLVRVVVAESLYRAWSVTMNHPYHRE.

Residues Leu-72, Gly-103, and 122–127 (LSPLTL) each bind S-adenosyl-L-methionine.

The protein belongs to the RNA methyltransferase RlmH family. As to quaternary structure, homodimer.

Its subcellular location is the cytoplasm. It catalyses the reaction pseudouridine(1915) in 23S rRNA + S-adenosyl-L-methionine = N(3)-methylpseudouridine(1915) in 23S rRNA + S-adenosyl-L-homocysteine + H(+). Its function is as follows. Specifically methylates the pseudouridine at position 1915 (m3Psi1915) in 23S rRNA. This Pasteurella multocida (strain Pm70) protein is Ribosomal RNA large subunit methyltransferase H.